Consider the following 428-residue polypeptide: Glutamyl-tRNA reductase (428 aa).

Substrate contacts are provided by residues 49 to 52, S109, 114 to 116, and Q120; these read TCNR and EGQ. C50 (nucleophile) is an active-site residue. Residue 189 to 194 participates in NADP(+) binding; sequence GAGKMS.

This sequence belongs to the glutamyl-tRNA reductase family. Homodimer.

The catalysed reaction is (S)-4-amino-5-oxopentanoate + tRNA(Glu) + NADP(+) = L-glutamyl-tRNA(Glu) + NADPH + H(+). It functions in the pathway porphyrin-containing compound metabolism; protoporphyrin-IX biosynthesis; 5-aminolevulinate from L-glutamyl-tRNA(Glu): step 1/2. The protein operates within porphyrin-containing compound metabolism; chlorophyll biosynthesis. In terms of biological role, catalyzes the NADPH-dependent reduction of glutamyl-tRNA(Glu) to glutamate 1-semialdehyde (GSA). This is Glutamyl-tRNA reductase from Gloeothece citriformis (strain PCC 7424) (Cyanothece sp. (strain PCC 7424)).